The chain runs to 360 residues: Tryptophan--tRNA ligase, mitochondrial (360 aa).

ATP-binding positions include Gln-38 and 44 to 47 (HLGN). The 'HIGH' region signature appears at 39–47 (PTGIPHLGN). L-tryptophan is bound at residue Asp-168. Residues 180–182 (GED) and 229–233 (KMSKS) contribute to the ATP site. The segment covering 220–230 (IRSLREPEKKM) has biased composition (basic and acidic residues). Positions 220-241 (IRSLREPEKKMSKSSGGPRSRI) are disordered. The 'KMSKS' region signature appears at 229-233 (KMSKS).

It belongs to the class-I aminoacyl-tRNA synthetase family.

Its subcellular location is the mitochondrion matrix. The catalysed reaction is tRNA(Trp) + L-tryptophan + ATP = L-tryptophyl-tRNA(Trp) + AMP + diphosphate + H(+). Functionally, catalyzes the attachment of tryptophan to tRNA(Trp). This chain is Tryptophan--tRNA ligase, mitochondrial, found in Caenorhabditis elegans.